The primary structure comprises 79 residues: Succinate dehydrogenase assembly factor 1, mitochondrial (79 aa).

The protein belongs to the complex I LYR family. SDHAF1 subfamily. Interacts with SDH2 within an SDH1-SDH2 subcomplex.

It localises to the mitochondrion matrix. Its function is as follows. Plays an essential role in the assembly of succinate dehydrogenase (SDH), an enzyme complex (also referred to as respiratory complex II) that is a component of both the tricarboxylic acid (TCA) cycle and the mitochondrial electron transport chain, and which couples the oxidation of succinate to fumarate with the reduction of ubiquinone (coenzyme Q) to ubiquinol. Promotes maturation of the iron-sulfur protein subunit SDH2 of the SDH catalytic dimer, protecting it from the deleterious effects of oxidants. Acts together with SDHAF3 (SDH7). The chain is Succinate dehydrogenase assembly factor 1, mitochondrial from Saccharomyces cerevisiae (strain YJM789) (Baker's yeast).